Reading from the N-terminus, the 716-residue chain is Polyribonucleotide nucleotidyltransferase (716 aa).

D490 and D496 together coordinate Mg(2+). The KH domain maps to 556–615; that stretch reads PKIETLTIPTDKIREVIGSGGKVIREIVETSGAKVDINDDGVIKIASNDQAAIKKAYDMI. Residues 625–693 form the S1 motif domain; that stretch reads GQIYTGKVVK…ERGKVRLGMK (69 aa). A disordered region spans residues 695–716; the sequence is VDQETGQEIQPEKKEKEEAGEA. Residues 704–716 are compositionally biased toward basic and acidic residues; it reads QPEKKEKEEAGEA.

The protein belongs to the polyribonucleotide nucleotidyltransferase family. Mg(2+) is required as a cofactor.

It localises to the cytoplasm. The catalysed reaction is RNA(n+1) + phosphate = RNA(n) + a ribonucleoside 5'-diphosphate. Involved in mRNA degradation. Catalyzes the phosphorolysis of single-stranded polyribonucleotides processively in the 3'- to 5'-direction. The chain is Polyribonucleotide nucleotidyltransferase from Cereibacter sphaeroides (strain ATCC 17029 / ATH 2.4.9) (Rhodobacter sphaeroides).